A 316-amino-acid chain; its full sequence is L-lactate dehydrogenase (316 aa).

Residues V15, D37, K42, Y68, and 82 to 83 (GL) each bind NAD(+). Residues Q85, R91, and 123–126 (NPVD) contribute to the substrate site. NAD(+) is bound by residues 121 to 123 (ASN) and T146. 151 to 154 (DTSR) serves as a coordination point for substrate. Positions 156 and 171 each coordinate beta-D-fructose 1,6-bisphosphate. Residue H178 is the Proton acceptor of the active site. Y222 bears the Phosphotyrosine mark. T231 lines the substrate pocket.

The protein belongs to the LDH/MDH superfamily. LDH family. Homotetramer.

The protein resides in the cytoplasm. The catalysed reaction is (S)-lactate + NAD(+) = pyruvate + NADH + H(+). The protein operates within fermentation; pyruvate fermentation to lactate; (S)-lactate from pyruvate: step 1/1. With respect to regulation, allosterically activated by fructose 1,6-bisphosphate (FBP). Its function is as follows. Catalyzes the conversion of lactate to pyruvate. The sequence is that of L-lactate dehydrogenase from Borreliella afzelii (strain PKo) (Borrelia afzelii).